The following is a 382-amino-acid chain: Dodecanoyl-[acyl-carrier-protein] hydrolase, chloroplastic (382 aa).

The N-terminal 83 residues, 1–83, are a transit peptide targeting the chloroplast; sequence MATTSLASAF…FSAAEKQWTN (83 aa). Catalysis depends on residues N283, H285, and C320.

The protein belongs to the acyl-ACP thioesterase family.

It localises to the plastid. It is found in the chloroplast. The catalysed reaction is dodecanoyl-[ACP] + H2O = dodecanoate + holo-[ACP] + H(+). Functionally, plays an essential role in chain termination during de novo fatty acid synthesis. High thioesterase activity for myristoyl-ACP. The sequence is that of Dodecanoyl-[acyl-carrier-protein] hydrolase, chloroplastic from Cinnamomum camphora (Camphor tree).